Consider the following 324-residue polypeptide: Geranylgeranyl diphosphate synthase (324 aa).

The isopentenyl diphosphate site is built by Lys-46, Arg-49, and His-78. The Mg(2+) site is built by Asp-85 and Asp-89. Arg-94 is a binding site for an all-trans-polyprenyl diphosphate. Arg-95 provides a ligand contact to isopentenyl diphosphate. 5 residues coordinate an all-trans-polyprenyl diphosphate: Lys-176, Thr-177, Gln-214, Lys-231, and Lys-241.

Belongs to the FPP/GGPP synthase family. It depends on Mg(2+) as a cofactor.

It carries out the reaction isopentenyl diphosphate + (2E,6E)-farnesyl diphosphate = (2E,6E,10E)-geranylgeranyl diphosphate + diphosphate. Its pathway is isoprenoid biosynthesis; geranylgeranyl diphosphate biosynthesis; geranylgeranyl diphosphate from farnesyl diphosphate and isopentenyl diphosphate: step 1/1. In terms of biological role, catalyzes the sequential condensation of isopentenyl pyrophosphate with the allylic pyrophosphates to yield geranylgeranyl diphosphate (GGPP) which is a precursor of the ether-linked lipids. The polypeptide is Geranylgeranyl diphosphate synthase (Methanosarcina mazei (strain ATCC BAA-159 / DSM 3647 / Goe1 / Go1 / JCM 11833 / OCM 88) (Methanosarcina frisia)).